The following is a 468-amino-acid chain: Mitochondrial distribution and morphology protein 10 (468 aa).

This sequence belongs to the MDM10 family. In terms of assembly, component of the ER-mitochondria encounter structure (ERMES) or MDM complex, composed of MMM1, MDM10, MDM12 and MDM34. Associates with the mitochondrial outer membrane sorting assembly machinery SAM(core) complex.

The protein localises to the mitochondrion outer membrane. Its function is as follows. Component of the ERMES/MDM complex, which serves as a molecular tether to connect the endoplasmic reticulum and mitochondria. Components of this complex are involved in the control of mitochondrial shape and protein biogenesis and may function in phospholipid exchange. MDM10 is involved in the late assembly steps of the general translocase of the mitochondrial outer membrane (TOM complex). Functions in the TOM40-specific route of the assembly of outer membrane beta-barrel proteins, including the association of TOM40 with the receptor TOM22 and small TOM proteins. Can associate with the SAM(core) complex as well as the MDM12-MMM1 complex, both involved in late steps of the major beta-barrel assembly pathway, that is responsible for biogenesis of all outer membrane beta-barrel proteins. May act as a switch that shuttles between both complexes and channels precursor proteins into the TOM40-specific pathway. Plays a role in mitochondrial morphology and in the inheritance of mitochondria. This chain is Mitochondrial distribution and morphology protein 10, found in Blastomyces gilchristii (strain SLH14081) (Blastomyces dermatitidis).